The sequence spans 163 residues: Nucleotide-binding protein Npun_R4736 (163 aa).

The protein belongs to the YajQ family.

Its function is as follows. Nucleotide-binding protein. This Nostoc punctiforme (strain ATCC 29133 / PCC 73102) protein is Nucleotide-binding protein Npun_R4736.